Reading from the N-terminus, the 127-residue chain is Small ribosomal subunit protein uS11 (127 aa).

This sequence belongs to the universal ribosomal protein uS11 family. Part of the 30S ribosomal subunit. Interacts with proteins S7 and S18. Binds to IF-3.

Located on the platform of the 30S subunit, it bridges several disparate RNA helices of the 16S rRNA. Forms part of the Shine-Dalgarno cleft in the 70S ribosome. In Chlorobium phaeobacteroides (strain BS1), this protein is Small ribosomal subunit protein uS11.